Here is a 228-residue protein sequence, read N- to C-terminus: Urease accessory protein UreF (228 aa).

It belongs to the UreF family. In terms of assembly, ureD, UreF and UreG form a complex that acts as a GTP-hydrolysis-dependent molecular chaperone, activating the urease apoprotein by helping to assemble the nickel containing metallocenter of UreC. The UreE protein probably delivers the nickel.

It is found in the cytoplasm. Its function is as follows. Required for maturation of urease via the functional incorporation of the urease nickel metallocenter. The sequence is that of Urease accessory protein UreF from Dechloromonas aromatica (strain RCB).